The following is a 230-amino-acid chain: Protein UPS2, mitochondrial (230 aa).

Residues 1-175 (MKLFQNSYDF…VLQVFSENWE (175 aa)) form the PRELI/MSF1 domain.

The protein belongs to the slowmo family. Interacts with MDM35.

The protein resides in the mitochondrion inner membrane. It localises to the mitochondrion intermembrane space. Required for mitochondrial cristae morphogenesis and MGM1-processing. Controls the stability of mitochondrial phosphatidylethanolamine (PE). With UPS1, controls the level of cardiolipin in mitochondria. Cardiolipin is a unique phospholipid with four fatty acid chains and is present mainly in the mitochondrial inner membrane where it stabilizes the electron transport chain supercomplex between complexes III and IV through direct interaction of their subunits. This is Protein UPS2, mitochondrial (UPS2) from Saccharomyces cerevisiae (strain ATCC 204508 / S288c) (Baker's yeast).